Consider the following 348-residue polypeptide: MKILIIGPSWVGDMVMSHSLYQQLKQQYPKSQIDVMAPDWCRPLLARMPEVHKAITMPIGHGAFRLMERYQIGKSLRNQYDLAIVLPNSFKSAFIPFFARIAHRRGWKGESRYCLLNDLRTNKNDYPMMVQRYVALAFEATQVPKPDDLPIAFPYLQTQADEIAQTKAKFAQKLTATENRPLIGFCPGAEFGPAKRWPHYHYAKLAEILIEKGFAICLFGSKKDQIIAEQIRLGLAEHSQRYCINLAGQTDLNQAVDLIADCRAIVSNDSGLMHIAAALNKPKPLVALYGPTSPSYTPPLSKQAVIIRLIDGGLIKIRKGEAKEGYHQSLIDITPDRVVQELNQLLAC.

Belongs to the glycosyltransferase 9 family.

It carries out the reaction an L-alpha-D-Hep-(1-&gt;5)-[alpha-Kdo-(2-&gt;4)]-alpha-Kdo-(2-&gt;6)-lipid A + ADP-L-glycero-beta-D-manno-heptose = an L-alpha-D-Hep-(1-&gt;3)-L-alpha-D-Hep-(1-&gt;5)-[alpha-Kdo-(2-&gt;4)]-alpha-Kdo-(2-&gt;6)-lipid A + ADP + H(+). It participates in bacterial outer membrane biogenesis; LOS core biosynthesis. In terms of biological role, glycosyltransferase involved in the biosynthesis of the core oligosaccharide region of lipooligosaccharide (LOS). Catalyzes the addition of a heptose unit to the heptosyl-Kdo2-lipid A module. This is Lipooligosaccharide heptosyltransferase 2 from Haemophilus ducreyi (strain 35000HP / ATCC 700724).